Reading from the N-terminus, the 93-residue chain is 3-isopropylmalate dehydratase small subunit (93 aa).

This sequence belongs to the LeuD family. LeuD type 1 subfamily. Heterodimer of LeuC and LeuD.

It carries out the reaction (2R,3S)-3-isopropylmalate = (2S)-2-isopropylmalate. The protein operates within amino-acid biosynthesis; L-leucine biosynthesis; L-leucine from 3-methyl-2-oxobutanoate: step 2/4. Its function is as follows. Catalyzes the isomerization between 2-isopropylmalate and 3-isopropylmalate, via the formation of 2-isopropylmaleate. The chain is 3-isopropylmalate dehydratase small subunit (leuD) from Actinoplanes teichomyceticus.